Reading from the N-terminus, the 835-residue chain is Replication origin-binding protein (835 aa).

Positions 54–215 constitute a Helicase ATP-binding domain; sequence PGMSQTRPVT…SGLRGDENIH (162 aa). 67-74 is a binding site for ATP; the sequence is APMGSGKT.

Belongs to the herpesviridae OriBP family. In terms of assembly, homodimer. Interacts with the major DNA-binding protein. Interacts with the helicase/primase component 52 and the polymerase accessory protein.

It is found in the host nucleus. Functions as a docking protein to recruit essential components of the viral replication machinery to viral DNA origins. In the presence of the major DNA-binding protein, opens dsDNA leading to a conformational change in the origin that facilitates DNA unwinding and subsequent replication. In Homo sapiens (Human), this protein is Replication origin-binding protein.